A 428-amino-acid chain; its full sequence is Glutamate-1-semialdehyde 2,1-aminomutase 1 (428 aa).

The residue at position 267 (K267) is an N6-(pyridoxal phosphate)lysine.

The protein belongs to the class-III pyridoxal-phosphate-dependent aminotransferase family. HemL subfamily. As to quaternary structure, homodimer. Pyridoxal 5'-phosphate is required as a cofactor.

It localises to the cytoplasm. The enzyme catalyses (S)-4-amino-5-oxopentanoate = 5-aminolevulinate. Its pathway is porphyrin-containing compound metabolism; protoporphyrin-IX biosynthesis; 5-aminolevulinate from L-glutamyl-tRNA(Glu): step 2/2. The sequence is that of Glutamate-1-semialdehyde 2,1-aminomutase 1 from Staphylococcus aureus (strain Mu3 / ATCC 700698).